Reading from the N-terminus, the 89-residue chain is Small ribosomal subunit protein uS15 (89 aa).

Belongs to the universal ribosomal protein uS15 family. In terms of assembly, part of the 30S ribosomal subunit. Forms a bridge to the 50S subunit in the 70S ribosome, contacting the 23S rRNA.

In terms of biological role, one of the primary rRNA binding proteins, it binds directly to 16S rRNA where it helps nucleate assembly of the platform of the 30S subunit by binding and bridging several RNA helices of the 16S rRNA. Forms an intersubunit bridge (bridge B4) with the 23S rRNA of the 50S subunit in the ribosome. The sequence is that of Small ribosomal subunit protein uS15 from Vibrio vulnificus (strain YJ016).